A 122-amino-acid polypeptide reads, in one-letter code: Large ribosomal subunit protein uL18 (122 aa).

A compositionally biased stretch (basic residues) spans 1 to 19 (MTKLSRKLQTQKRHRRLRR). Positions 1 to 21 (MTKLSRKLQTQKRHRRLRRSV) are disordered.

Belongs to the universal ribosomal protein uL18 family. As to quaternary structure, part of the 50S ribosomal subunit; part of the 5S rRNA/L5/L18/L25 subcomplex. Contacts the 5S and 23S rRNAs.

This is one of the proteins that bind and probably mediate the attachment of the 5S RNA into the large ribosomal subunit, where it forms part of the central protuberance. The polypeptide is Large ribosomal subunit protein uL18 (Prochlorococcus marinus (strain MIT 9312)).